The sequence spans 494 residues: NADH-quinone oxidoreductase subunit N (494 aa).

14 consecutive transmembrane segments (helical) span residues 9–29 (VIPE…DLFL), 36–56 (LTYV…LSDF), 73–93 (PMSN…LVYS), 107–127 (LGGE…VMMS), 131–151 (FLII…LVAF), 166–186 (FVLG…LYGA), 209–229 (LIFG…AVPF), 241–261 (PTAV…AITI), 278–298 (MLTI…IMQT), 304–324 (LAYS…SGVV), 339–359 (MFYV…IMLL), 382–402 (FAFV…VVGF), 416–436 (GQIW…FYYL), and 469–489 (ALLA…AAII).

The protein belongs to the complex I subunit 2 family. NDH-1 is composed of 14 different subunits. Subunits NuoA, H, J, K, L, M, N constitute the membrane sector of the complex.

The protein resides in the cell inner membrane. The enzyme catalyses a quinone + NADH + 5 H(+)(in) = a quinol + NAD(+) + 4 H(+)(out). Its function is as follows. NDH-1 shuttles electrons from NADH, via FMN and iron-sulfur (Fe-S) centers, to quinones in the respiratory chain. The immediate electron acceptor for the enzyme in this species is believed to be ubiquinone. Couples the redox reaction to proton translocation (for every two electrons transferred, four hydrogen ions are translocated across the cytoplasmic membrane), and thus conserves the redox energy in a proton gradient. This Herminiimonas arsenicoxydans protein is NADH-quinone oxidoreductase subunit N.